A 164-amino-acid chain; its full sequence is HTH-type transcriptional regulator IscR (164 aa).

An HTH rrf2-type domain is found at Arg-2–Asn-131. Positions Leu-28–Lys-51 form a DNA-binding region, H-T-H motif. Residues Cys-92, Cys-98, and Cys-104 each coordinate [2Fe-2S] cluster. The interval Asn-143–Ala-164 is disordered. Residues Gly-152 to Ala-164 are compositionally biased toward polar residues.

[2Fe-2S] cluster serves as cofactor.

In terms of biological role, regulates the transcription of several operons and genes involved in the biogenesis of Fe-S clusters and Fe-S-containing proteins. In Yersinia enterocolitica serotype O:8 / biotype 1B (strain NCTC 13174 / 8081), this protein is HTH-type transcriptional regulator IscR.